A 603-amino-acid polypeptide reads, in one-letter code: Glutamyl-tRNA(Gln) amidotransferase subunit E (603 aa).

This sequence belongs to the GatB/GatE family. GatE subfamily. As to quaternary structure, heterodimer of GatD and GatE.

It carries out the reaction L-glutamyl-tRNA(Gln) + L-glutamine + ATP + H2O = L-glutaminyl-tRNA(Gln) + L-glutamate + ADP + phosphate + H(+). Allows the formation of correctly charged Gln-tRNA(Gln) through the transamidation of misacylated Glu-tRNA(Gln) in organisms which lack glutaminyl-tRNA synthetase. The reaction takes place in the presence of glutamine and ATP through an activated gamma-phospho-Glu-tRNA(Gln). The GatDE system is specific for glutamate and does not act on aspartate. The protein is Glutamyl-tRNA(Gln) amidotransferase subunit E of Thermoplasma acidophilum (strain ATCC 25905 / DSM 1728 / JCM 9062 / NBRC 15155 / AMRC-C165).